A 174-amino-acid chain; its full sequence is Crossover junction endodeoxyribonuclease RuvC (174 aa).

Residues Asp-8, Glu-67, and Asp-139 contribute to the active site. Asp-8, Glu-67, and Asp-139 together coordinate Mg(2+).

It belongs to the RuvC family. In terms of assembly, homodimer which binds Holliday junction (HJ) DNA. The HJ becomes 2-fold symmetrical on binding to RuvC with unstacked arms; it has a different conformation from HJ DNA in complex with RuvA. In the full resolvosome a probable DNA-RuvA(4)-RuvB(12)-RuvC(2) complex forms which resolves the HJ. Mg(2+) serves as cofactor.

Its subcellular location is the cytoplasm. The enzyme catalyses Endonucleolytic cleavage at a junction such as a reciprocal single-stranded crossover between two homologous DNA duplexes (Holliday junction).. In terms of biological role, the RuvA-RuvB-RuvC complex processes Holliday junction (HJ) DNA during genetic recombination and DNA repair. Endonuclease that resolves HJ intermediates. Cleaves cruciform DNA by making single-stranded nicks across the HJ at symmetrical positions within the homologous arms, yielding a 5'-phosphate and a 3'-hydroxyl group; requires a central core of homology in the junction. The consensus cleavage sequence is 5'-(A/T)TT(C/G)-3'. Cleavage occurs on the 3'-side of the TT dinucleotide at the point of strand exchange. HJ branch migration catalyzed by RuvA-RuvB allows RuvC to scan DNA until it finds its consensus sequence, where it cleaves and resolves the cruciform DNA. In Stutzerimonas stutzeri (strain A1501) (Pseudomonas stutzeri), this protein is Crossover junction endodeoxyribonuclease RuvC.